We begin with the raw amino-acid sequence, 127 residues long: Trefoil factor 2 (127 aa).

Residues 1-21 (EPQRPAPGHPPPAGAVCLTGA) form the signal peptide. Gln22 is modified (pyrrolidone carboxylic acid). P-type domains lie at 27-71 (CRCS…FKPL) and 77-120 (EECV…FFPM). Cystine bridges form between Cys27/Cys125, Cys29/Cys56, Cys40/Cys55, Cys50/Cys67, Cys79/Cys105, Cys89/Cys104, and Cys99/Cys116.

In terms of tissue distribution, found in pancreas.

It localises to the secreted. Its function is as follows. Inhibits gastrointestinal motility and gastric acid secretion. Could function as a structural component of gastric mucus, possibly by stabilizing glycoproteins in the mucus gel through interactions with carbohydrate side chains. This chain is Trefoil factor 2 (TFF2), found in Sus scrofa (Pig).